Consider the following 424-residue polypeptide: Protein CLP1 homolog 5 (424 aa).

ATP-binding positions include E16, T56, and 124–129 (DSGKST).

The protein belongs to the Clp1 family. Clp1 subfamily. Forms a complex with cleavage and polyadenylation specificity factor (CPSF) subunits PCFS1, FIPS3 and CPSF30.

The protein resides in the nucleus. In terms of biological role, required for endonucleolytic cleavage during polyadenylation-dependent pre-mRNA 3'-end formation. This chain is Protein CLP1 homolog 5, found in Arabidopsis thaliana (Mouse-ear cress).